The sequence spans 616 residues: 1-deoxy-D-xylulose-5-phosphate synthase (616 aa).

Residues histidine 74 and 115-117 contribute to the thiamine diphosphate site; that span reads GHS. Position 146 (aspartate 146) interacts with Mg(2+). Residues 147-148, asparagine 175, tyrosine 282, and glutamate 365 each bind thiamine diphosphate; that span reads GA. Residue asparagine 175 participates in Mg(2+) binding.

This sequence belongs to the transketolase family. DXPS subfamily. Homodimer. The cofactor is Mg(2+). Thiamine diphosphate serves as cofactor.

It carries out the reaction D-glyceraldehyde 3-phosphate + pyruvate + H(+) = 1-deoxy-D-xylulose 5-phosphate + CO2. It participates in metabolic intermediate biosynthesis; 1-deoxy-D-xylulose 5-phosphate biosynthesis; 1-deoxy-D-xylulose 5-phosphate from D-glyceraldehyde 3-phosphate and pyruvate: step 1/1. Catalyzes the acyloin condensation reaction between C atoms 2 and 3 of pyruvate and glyceraldehyde 3-phosphate to yield 1-deoxy-D-xylulose-5-phosphate (DXP). This Chromobacterium violaceum (strain ATCC 12472 / DSM 30191 / JCM 1249 / CCUG 213 / NBRC 12614 / NCIMB 9131 / NCTC 9757 / MK) protein is 1-deoxy-D-xylulose-5-phosphate synthase.